The primary structure comprises 155 residues: MAEELVKPYNGDPFVGHLSTPISDSGLVKTFIGNLPAYRQGLSPILRGLEVGMAHGYFLIGPWVKLGPLRDSDVANLGGLISGIALILVATACLAAYGLVSFQKGGSSSDPLKTSEGWSQFTAGFFVGAMGSAFVAFFLLENFSVVDGIMTGLFN.

2 helical membrane-spanning segments follow: residues 80-102 (LISG…LVSF) and 117-139 (GWSQ…AFFL).

This sequence belongs to the PsaL family.

Its subcellular location is the cellular thylakoid membrane. The chain is Photosystem I reaction center subunit XI from Thermosynechococcus vestitus (strain NIES-2133 / IAM M-273 / BP-1).